A 169-amino-acid polypeptide reads, in one-letter code: Cytochrome c oxidase subunit 4 isoform 1, mitochondrial (169 aa).

The N-terminal 22 residues, 1-22 (MLASRALSLIGKRAISTSVCLR), are a transit peptide targeting the mitochondrion. The Mitochondrial matrix portion of the chain corresponds to 23–99 (AHGSVVKSED…FAEMNRGTNE (77 aa)). K29 is subject to N6-acetyllysine; alternate. K29 carries the N6-succinyllysine; alternate modification. Phosphoserine is present on residues S56 and S58. The residue at position 60 (K60) is an N6-acetyllysine; alternate. The residue at position 60 (K60) is an N6-succinyllysine; alternate. An N6-acetyllysine modification is found at K67. A helical transmembrane segment spans residues 100–125 (WKTVVGMAMFFIGFTALVLIWEKSYV). Residues 126 to 169 (YGPIPHTFDRDWVAMQTKRMLDMKANPIQGFSAKWDYDKNEWKK) are Mitochondrial intermembrane-facing.

Belongs to the cytochrome c oxidase IV family. In terms of assembly, component of the cytochrome c oxidase (complex IV, CIV), a multisubunit enzyme composed of 14 subunits. The complex is composed of a catalytic core of 3 subunits MT-CO1, MT-CO2 and MT-CO3, encoded in the mitochondrial DNA, and 11 supernumerary subunits COX4I, COX5A, COX5B, COX6A, COX6B, COX6C, COX7A, COX7B, COX7C, COX8 and NDUFA4, which are encoded in the nuclear genome. The complex exists as a monomer or a dimer and forms supercomplexes (SCs) in the inner mitochondrial membrane with NADH-ubiquinone oxidoreductase (complex I, CI) and ubiquinol-cytochrome c oxidoreductase (cytochrome b-c1 complex, complex III, CIII), resulting in different assemblies (supercomplex SCI(1)III(2)IV(1) and megacomplex MCI(2)III(2)IV(2)). Interacts with PHB2; the interaction decreases in absence of SPHK2. Interacts with AFG1L. Interacts with ABCB7; this interaction allows the regulation of cellular iron homeostasis and cellular reactive oxygen species (ROS) levels in cardiomyocytes. Interacts with FLVCR2; this interaction occurs in the absence of heme and is disrupted upon heme binding. Interacts with IRGC.

The protein resides in the mitochondrion inner membrane. The protein operates within energy metabolism; oxidative phosphorylation. Its function is as follows. Component of the cytochrome c oxidase, the last enzyme in the mitochondrial electron transport chain which drives oxidative phosphorylation. The respiratory chain contains 3 multisubunit complexes succinate dehydrogenase (complex II, CII), ubiquinol-cytochrome c oxidoreductase (cytochrome b-c1 complex, complex III, CIII) and cytochrome c oxidase (complex IV, CIV), that cooperate to transfer electrons derived from NADH and succinate to molecular oxygen, creating an electrochemical gradient over the inner membrane that drives transmembrane transport and the ATP synthase. Cytochrome c oxidase is the component of the respiratory chain that catalyzes the reduction of oxygen to water. Electrons originating from reduced cytochrome c in the intermembrane space (IMS) are transferred via the dinuclear copper A center (CU(A)) of subunit 2 and heme A of subunit 1 to the active site in subunit 1, a binuclear center (BNC) formed by heme A3 and copper B (CU(B)). The BNC reduces molecular oxygen to 2 water molecules using 4 electrons from cytochrome c in the IMS and 4 protons from the mitochondrial matrix. The protein is Cytochrome c oxidase subunit 4 isoform 1, mitochondrial (Cox4i1) of Mus musculus (Mouse).